An 835-amino-acid polypeptide reads, in one-letter code: Protein translocase subunit SecA 1 (835 aa).

ATP contacts are provided by residues Gln-85, 103 to 107 (GEGKT), and Asp-492. Residues 788–807 (VQGEAVHPSSDGEEAKKKPV) are disordered. Zn(2+) contacts are provided by Cys-819, Cys-821, Cys-830, and Cys-831.

The protein belongs to the SecA family. As to quaternary structure, monomer and homodimer. Part of the essential Sec protein translocation apparatus which comprises SecA, SecYEG and auxiliary proteins SecDF. Other proteins may also be involved. Zn(2+) serves as cofactor.

The protein localises to the cell membrane. It localises to the cytoplasm. It carries out the reaction ATP + H2O + cellular proteinSide 1 = ADP + phosphate + cellular proteinSide 2.. In terms of biological role, part of the Sec protein translocase complex. Interacts with the SecYEG preprotein conducting channel. Has a central role in coupling the hydrolysis of ATP to the transfer of proteins into and across the cell membrane, serving as an ATP-driven molecular motor driving the stepwise translocation of polypeptide chains across the membrane. The protein is Protein translocase subunit SecA 1 of Bacillus anthracis.